A 187-amino-acid polypeptide reads, in one-letter code: DNA-3-methyladenine glycosylase 1 (187 aa).

Zn(2+)-binding residues include C4, H17, H175, and C179.

It catalyses the reaction Hydrolysis of alkylated DNA, releasing 3-methyladenine.. With respect to regulation, activity is controlled by product inhibition. Its function is as follows. Hydrolysis of the deoxyribose N-glycosidic bond to excise 3-methyladenine from the damaged DNA polymer formed by alkylation lesions. The sequence is that of DNA-3-methyladenine glycosylase 1 from Escherichia coli (strain K12).